We begin with the raw amino-acid sequence, 315 residues long: MGFIMEFKHKSVLLEETIDNLNIKPDGIYVDGTLGGAGHSYQIAKRLTGGGRLIGIDQDADAIAAATERLKEFEERVTIVRNNYCNMDKVLDELGIDKVDGILLDIGVSSYQLDTASRGFTYNVDTALDMRMDQRQEMTAKDLVNTYSEMELFRIIRDYGEDRFAKNIAKHIVAARKEKPIETTFELNEIIKASIPAKVRATGGHPSKRTYQAIRIELNRELDVLENSIDMMIDRLNPQGRLCIITFHSLEDRIVKARFRNNENPCTCPPDFPVCVCGKKSKGKVITRKPIVPGDEELNENQRSKSSKLRVFERI.

Residues 37-39 (AGH), D57, Y84, D105, and Q112 each bind S-adenosyl-L-methionine.

It belongs to the methyltransferase superfamily. RsmH family.

Its subcellular location is the cytoplasm. It catalyses the reaction cytidine(1402) in 16S rRNA + S-adenosyl-L-methionine = N(4)-methylcytidine(1402) in 16S rRNA + S-adenosyl-L-homocysteine + H(+). Specifically methylates the N4 position of cytidine in position 1402 (C1402) of 16S rRNA. This Lachnospira eligens (strain ATCC 27750 / DSM 3376 / VPI C15-48 / C15-B4) (Eubacterium eligens) protein is Ribosomal RNA small subunit methyltransferase H.